Here is a 510-residue protein sequence, read N- to C-terminus: Coatomer subunit delta (510 aa).

Residues 270-510 (MESVHMKIEE…TFLVDKYEIL (241 aa)) enclose the MHD domain.

It belongs to the adaptor complexes medium subunit family. Delta-COP subfamily. Oligomeric complex that consists of at least the alpha, beta, beta', gamma, delta, epsilon and zeta subunits.

It localises to the cytoplasm. The protein resides in the golgi apparatus membrane. It is found in the cytoplasmic vesicle. Its subcellular location is the COPI-coated vesicle membrane. Its function is as follows. The coatomer is a cytosolic protein complex that binds to dilysine motifs and reversibly associates with Golgi non-clathrin-coated vesicles, which further mediate biosynthetic protein transport from the ER, via the Golgi up to the trans Golgi network. Coatomer complex is required for budding from Golgi membranes, and is essential for the retrograde Golgi-to-ER transport of dilysine-tagged proteins. In mammals, the coatomer can only be recruited by membranes associated to ADP-ribosylation factors (ARFs), which are small GTP-binding proteins; the complex also influences the Golgi structural integrity, as well as the processing, activity, and endocytic recycling of LDL receptors. This is Coatomer subunit delta (ARCN1) from Gallus gallus (Chicken).